We begin with the raw amino-acid sequence, 508 residues long: Bifunctional purine biosynthesis protein PurH (508 aa).

Residues 1–145 (MTKRALISVS…KNHQYVTVIV (145 aa)) enclose the MGS-like domain.

The protein belongs to the PurH family.

The enzyme catalyses (6R)-10-formyltetrahydrofolate + 5-amino-1-(5-phospho-beta-D-ribosyl)imidazole-4-carboxamide = 5-formamido-1-(5-phospho-D-ribosyl)imidazole-4-carboxamide + (6S)-5,6,7,8-tetrahydrofolate. It carries out the reaction IMP + H2O = 5-formamido-1-(5-phospho-D-ribosyl)imidazole-4-carboxamide. It participates in purine metabolism; IMP biosynthesis via de novo pathway; 5-formamido-1-(5-phospho-D-ribosyl)imidazole-4-carboxamide from 5-amino-1-(5-phospho-D-ribosyl)imidazole-4-carboxamide (10-formyl THF route): step 1/1. The protein operates within purine metabolism; IMP biosynthesis via de novo pathway; IMP from 5-formamido-1-(5-phospho-D-ribosyl)imidazole-4-carboxamide: step 1/1. The sequence is that of Bifunctional purine biosynthesis protein PurH from Lysinibacillus sphaericus (strain C3-41).